The chain runs to 274 residues: NADPH-dependent 7-cyano-7-deazaguanine reductase (274 aa).

A substrate-binding site is contributed by 81–83 (IES). 83 to 84 (SK) contributes to the NADPH binding site. Residue cysteine 182 is the Thioimide intermediate of the active site. Catalysis depends on aspartate 189, which acts as the Proton donor. Substrate is bound at residue 221–222 (HE). 250 to 251 (RG) lines the NADPH pocket.

Belongs to the GTP cyclohydrolase I family. QueF type 2 subfamily. Homodimer.

The protein resides in the cytoplasm. The catalysed reaction is 7-aminomethyl-7-carbaguanine + 2 NADP(+) = 7-cyano-7-deazaguanine + 2 NADPH + 3 H(+). It functions in the pathway tRNA modification; tRNA-queuosine biosynthesis. Catalyzes the NADPH-dependent reduction of 7-cyano-7-deazaguanine (preQ0) to 7-aminomethyl-7-deazaguanine (preQ1). The protein is NADPH-dependent 7-cyano-7-deazaguanine reductase of Hahella chejuensis (strain KCTC 2396).